Here is a 141-residue protein sequence, read N- to C-terminus: Hemoglobin subunit alpha (141 aa).

A Globin domain is found at 1–141; it reads VLSSADKTNI…VSTVLTSKYR (141 aa). At serine 3 the chain carries Phosphoserine. Lysine 7 carries the post-translational modification N6-succinyllysine. A Phosphothreonine modification is found at threonine 8. N6-succinyllysine is present on lysine 11. Residue lysine 16 is modified to N6-acetyllysine; alternate. Lysine 16 bears the N6-succinyllysine; alternate mark. Tyrosine 24 bears the Phosphotyrosine mark. The residue at position 35 (serine 35) is a Phosphoserine. At lysine 40 the chain carries N6-succinyllysine. Phosphoserine is present on serine 49. Histidine 58 is an O2 binding site. Residue histidine 87 participates in heme b binding. Position 102 is a phosphoserine (serine 102). A Phosphothreonine modification is found at threonine 108. Serine 124 and serine 131 each carry phosphoserine. Threonine 134 and threonine 137 each carry phosphothreonine. Serine 138 bears the Phosphoserine mark.

Belongs to the globin family. As to quaternary structure, heterotetramer of two alpha chains and two beta chains. Red blood cells.

Involved in oxygen transport from the lung to the various peripheral tissues. Its function is as follows. Hemopressin acts as an antagonist peptide of the cannabinoid receptor CNR1. Hemopressin-binding efficiently blocks cannabinoid receptor CNR1 and subsequent signaling. The sequence is that of Hemoglobin subunit alpha (HBA) from Rousettus aegyptiacus (Egyptian fruit bat).